A 277-amino-acid chain; its full sequence is Putative protein-disulfide oxidoreductase RC0029 (277 aa).

An N-terminal signal peptide occupies residues 1 to 22; it reads MRSIFIILIFLLFLSSCSEEKA. Residues 34 to 80 are disordered; sequence EHETQNNETSKATNQEAVNSENTTESIVPANDNNQTDEVSTPASQKQ. Residues 39–80 are compositionally biased toward polar residues; it reads NNETSKATNQEAVNSENTTESIVPANDNNQTDEVSTPASQKQ. The Thioredoxin domain maps to 76 to 265; that stretch reads ASQKQKNPAI…ISTAVDKALE (190 aa). A disulfide bridge connects residues Cys118 and Cys121.

Belongs to the thioredoxin family. DsbA subfamily.

The protein localises to the periplasm. Functionally, may be required for disulfide bond formation in some proteins. This chain is Putative protein-disulfide oxidoreductase RC0029, found in Rickettsia conorii (strain ATCC VR-613 / Malish 7).